The primary structure comprises 278 residues: Ribosomal RNA small subunit methyltransferase A (278 aa).

Residues N27, L29, G54, E75, D101, and N120 each contribute to the S-adenosyl-L-methionine site.

The protein belongs to the class I-like SAM-binding methyltransferase superfamily. rRNA adenine N(6)-methyltransferase family. RsmA subfamily.

It is found in the cytoplasm. The enzyme catalyses adenosine(1518)/adenosine(1519) in 16S rRNA + 4 S-adenosyl-L-methionine = N(6)-dimethyladenosine(1518)/N(6)-dimethyladenosine(1519) in 16S rRNA + 4 S-adenosyl-L-homocysteine + 4 H(+). In terms of biological role, specifically dimethylates two adjacent adenosines (A1518 and A1519) in the loop of a conserved hairpin near the 3'-end of 16S rRNA in the 30S particle. May play a critical role in biogenesis of 30S subunits. The chain is Ribosomal RNA small subunit methyltransferase A from Zymomonas mobilis subsp. mobilis (strain ATCC 31821 / ZM4 / CP4).